The sequence spans 1146 residues: Integrin alpha-PS1 (1146 aa).

Positions 1-30 are cleaved as a signal peptide; the sequence is MLELPFTTIRPNCRLRQNLGILIILQCVLT. The Extracellular segment spans residues 31–1085; sequence CYNFNLEQRL…NQQRDTSIPW (1055 aa). FG-GAP repeat units lie at residues 38–105, 121–186, 193–245, 254–303, 304–366, 367–422, and 432–494; these read QRLP…FDDC, LSPP…FEEV, RPVQ…YLQR, HSDL…KSTD, NPIP…TLPM, KYTL…GLNS, and ELGG…RKEL. N-linked (GlcNAc...) asparagine glycosylation is found at Asn-68, Asn-86, and Asn-147. 8 N-linked (GlcNAc...) asparagine glycosylation sites follow: Asn-470, Asn-511, Asn-657, Asn-680, Asn-711, Asn-718, Asn-761, and Asn-928. The segment at 938–958 is disordered; that stretch reads YYSSSHRDDHSDDTQSNRNRV. The span at 942-952 shows a compositional bias: basic and acidic residues; that stretch reads SHRDDHSDDTQ. An N-linked (GlcNAc...) asparagine glycan is attached at Asn-1027. A helical membrane pass occupies residues 1086–1106; that stretch reads LIIILGIVGGLLLLALVTYVL. Residues 1107 to 1146 are Cytoplasmic-facing; that stretch reads WKVGFFKRIRPTDPTLSGNLEKMNEEKPFLAPSKNTHHVF.

It belongs to the integrin alpha chain family. As to quaternary structure, heterodimer of an alpha and a beta subunit. The alpha subunit is composed of a heavy and a light chain linked by a disulfide bond. Alpha-PS1 associates with beta-PS. Expressed in follicle cells (at protein level). At syncytial blastoderm stage, expressed in the ectoderm but not in the mesodermal precursors. At embryonic stage 7, expressed in dorsal and ventrolateral ectoderm and in some yolk nuclei. At late stage 10, expression is homogeneous in the ectoderm and is particularly abundant in the anterior and posterior midgut primordia. At stage 11, strongly expressed in a metameric pattern in the ectoderm, in the proctodeum and in the posterior midgut primordium. At stage 12, accumulates at the segment boundaries that start to become morphologically visible, similar expression pattern is observed in the central nervous system. In third larval instar wing imaginal disk, strongly expressed in the dorsal compartment, in the adepithelial cells and in patches on the peripodial membrane covering the imaginal disk to the outside.

It is found in the apical cell membrane. It localises to the lateral cell membrane. The protein resides in the basal cell membrane. Functionally, integrin alpha-PS1/beta-PS is a receptor for laminin. This is Integrin alpha-PS1 (mew) from Drosophila melanogaster (Fruit fly).